Reading from the N-terminus, the 207-residue chain is Large ribosomal subunit protein uL4 (207 aa).

The segment at 55–75 (SAVRGGGRKPWRQKGTGRARQ) is disordered. The span at 60 to 71 (GGRKPWRQKGTG) shows a compositional bias: basic residues.

This sequence belongs to the universal ribosomal protein uL4 family. As to quaternary structure, part of the 50S ribosomal subunit.

Its function is as follows. One of the primary rRNA binding proteins, this protein initially binds near the 5'-end of the 23S rRNA. It is important during the early stages of 50S assembly. It makes multiple contacts with different domains of the 23S rRNA in the assembled 50S subunit and ribosome. Forms part of the polypeptide exit tunnel. The polypeptide is Large ribosomal subunit protein uL4 (Staphylococcus epidermidis (strain ATCC 35984 / DSM 28319 / BCRC 17069 / CCUG 31568 / BM 3577 / RP62A)).